Reading from the N-terminus, the 485-residue chain is Glutamyl-tRNA(Gln) amidotransferase subunit A (485 aa).

Residues K79 and S154 each act as charge relay system in the active site. S178 serves as the catalytic Acyl-ester intermediate.

The protein belongs to the amidase family. GatA subfamily. Heterotrimer of A, B and C subunits.

The enzyme catalyses L-glutamyl-tRNA(Gln) + L-glutamine + ATP + H2O = L-glutaminyl-tRNA(Gln) + L-glutamate + ADP + phosphate + H(+). In terms of biological role, allows the formation of correctly charged Gln-tRNA(Gln) through the transamidation of misacylated Glu-tRNA(Gln) in organisms which lack glutaminyl-tRNA synthetase. The reaction takes place in the presence of glutamine and ATP through an activated gamma-phospho-Glu-tRNA(Gln). This Staphylococcus aureus (strain bovine RF122 / ET3-1) protein is Glutamyl-tRNA(Gln) amidotransferase subunit A.